Here is a 1609-residue protein sequence, read N- to C-terminus: Probable outer membrane protein pmp21 (1609 aa).

Positions 1-30 (MVAKKTVRSYRSSFSHSVIVAILSAGIAFE) are cleaved as a signal peptide. The segment covering 132-145 (FSQPTQEPDTSNAV) has biased composition (polar residues). Disordered stretches follow at residues 132–183 (FSQP…KSPE) and 640–677 (TAPV…EVPP). Basic and acidic residues-rich tracts occupy residues 149–175 (ISSD…KEVS) and 651–672 (NKDE…KTVE). One can recognise an Autotransporter domain in the interval 1328–1609 (ELDFSTNVWG…DFNGGIRIIF (282 aa)).

Belongs to the PMP outer membrane protein family.

Its subcellular location is the secreted. The protein resides in the cell wall. It localises to the cell outer membrane. The sequence is that of Probable outer membrane protein pmp21 (pmp21) from Chlamydia pneumoniae (Chlamydophila pneumoniae).